Consider the following 374-residue polypeptide: Chaperone protein DnaJ (374 aa).

In terms of domain architecture, J spans 5–70; sequence CYYEILNVSK…SKRSRYDQFG (66 aa). Residues 130–207 form a CR-type zinc finger; that stretch reads GVEKEITIPR…CYGNGKVKKQ (78 aa). Zn(2+)-binding residues include Cys-143, Cys-146, Cys-159, Cys-162, Cys-181, Cys-184, Cys-195, and Cys-198. CXXCXGXG motif repeat units lie at residues 143–150, 159–166, 181–188, and 195–202; these read CDSCDGTG, CHACHGQG, CPVCNGTG, and CDACYGNG.

It belongs to the DnaJ family. Homodimer. Zn(2+) is required as a cofactor.

It is found in the cytoplasm. Functionally, participates actively in the response to hyperosmotic and heat shock by preventing the aggregation of stress-denatured proteins and by disaggregating proteins, also in an autonomous, DnaK-independent fashion. Unfolded proteins bind initially to DnaJ; upon interaction with the DnaJ-bound protein, DnaK hydrolyzes its bound ATP, resulting in the formation of a stable complex. GrpE releases ADP from DnaK; ATP binding to DnaK triggers the release of the substrate protein, thus completing the reaction cycle. Several rounds of ATP-dependent interactions between DnaJ, DnaK and GrpE are required for fully efficient folding. Also involved, together with DnaK and GrpE, in the DNA replication of plasmids through activation of initiation proteins. The polypeptide is Chaperone protein DnaJ (Francisella tularensis subsp. tularensis (strain FSC 198)).